The following is an 809-amino-acid chain: Glycerol-3-phosphate acyltransferase (809 aa).

The HXXXXD motif motif lies at 306–311 (HRSHMD).

It belongs to the GPAT/DAPAT family.

The protein localises to the cell inner membrane. It catalyses the reaction sn-glycerol 3-phosphate + an acyl-CoA = a 1-acyl-sn-glycero-3-phosphate + CoA. It functions in the pathway phospholipid metabolism; CDP-diacylglycerol biosynthesis; CDP-diacylglycerol from sn-glycerol 3-phosphate: step 1/3. The protein is Glycerol-3-phosphate acyltransferase of Vibrio vulnificus (strain CMCP6).